A 433-amino-acid chain; its full sequence is Mitochondrial distribution and morphology protein 12 (433 aa).

Positions 1–433 (MSIDIDWERA…VYPSFWTFLI (433 aa)) constitute an SMP-LTD domain. Disordered stretches follow at residues 62 to 113 (LSDP…GGQM), 180 to 279 (TPLG…RMRE), and 356 to 376 (GPETAAGSGGGDTLEPNSPRR). The segment covering 81 to 96 (SEERSPTREPVDRYGN) has biased composition (basic and acidic residues). Polar residues predominate over residues 214–236 (SAQSRPSTANTGNTLPSRDSMSV). Positions 268-279 (PLDDTPPRRMRE) are enriched in basic and acidic residues.

This sequence belongs to the MDM12 family. Component of the ER-mitochondria encounter structure (ERMES) or MDM complex, composed of MMM1, MDM10, MDM12 and MDM34. An MMM1 homodimer associates with one molecule of MDM12 on each side in a pairwise head-to-tail manner, and the SMP-LTD domains of MMM1 and MDM12 generate a continuous hydrophobic tunnel for phospholipid trafficking.

It localises to the mitochondrion outer membrane. The protein resides in the endoplasmic reticulum membrane. Functionally, component of the ERMES/MDM complex, which serves as a molecular tether to connect the endoplasmic reticulum (ER) and mitochondria. Components of this complex are involved in the control of mitochondrial shape and protein biogenesis, and function in nonvesicular lipid trafficking between the ER and mitochondria. MDM12 is required for the interaction of the ER-resident membrane protein MMM1 and the outer mitochondrial membrane-resident beta-barrel protein MDM10. The MDM12-MMM1 subcomplex functions in the major beta-barrel assembly pathway that is responsible for biogenesis of all mitochondrial outer membrane beta-barrel proteins, and acts in a late step after the SAM complex. The MDM10-MDM12-MMM1 subcomplex further acts in the TOM40-specific pathway after the action of the MDM12-MMM1 complex. Essential for establishing and maintaining the structure of mitochondria and maintenance of mtDNA nucleoids. The protein is Mitochondrial distribution and morphology protein 12 of Ajellomyces capsulatus (strain NAm1 / WU24) (Darling's disease fungus).